Consider the following 1291-residue polypeptide: Vacuolating cytotoxin autotransporter (1291 aa).

An N-terminal signal peptide occupies residues 1–33 (MEIQQTHRKINRPLVSLALVGALVSITPQQSHA). The interval 326–374 (PPEGGYKDKPNDKPSNTTQNNAKNDKQESSQNNSNTQVINPPNSAQKTE) is disordered. Composition is skewed to polar residues over residues 338-347 (KPSNTTQNNA) and 354-374 (SSQN…QKTE). Residues 1018 to 1291 (KYEKPTNVWA…ASNLGMRYSF (274 aa)) form the Autotransporter domain.

It is found in the periplasm. It localises to the secreted. Its subcellular location is the cell surface. The protein localises to the cell outer membrane. In terms of biological role, induces vacuolation of eukaryotic cells. Causes ulceration and gastric lesions. In Helicobacter pylori (Campylobacter pylori), this protein is Vacuolating cytotoxin autotransporter (vacA).